The sequence spans 441 residues: Endothelin receptor type B (441 aa).

Residues 1-26 form the signal peptide; it reads MQPPPSLCGLALLALVLACGMAEVWG. Topologically, residues 27–100 are extracellular; the sequence is EEREMPSAPA…RPTEIKDTFK (74 aa). The tract at residues 30–90 is disordered; it reads EMPSAPATPP…APRRTPPPCQ (61 aa). The span at 47 to 65 shows a compositional bias: polar residues; it reads LTPSTKTSWPRDSNASLPR. An N-linked (GlcNAc...) asparagine glycan is attached at N60. Residues 101–125 traverse the membrane as a helical segment; sequence YINTVVSCLVFVLGIIGNSTLLRII. The Cytoplasmic segment spans residues 126–136; sequence YKNKCMRNGPN. A helical membrane pass occupies residues 137–162; sequence ILIASLALGDLLHIIIDIPINVYKLL. Residues 163-174 are Extracellular-facing; that stretch reads AEDWPFGAEMCK. C173 and C254 form a disulfide bridge. A helical membrane pass occupies residues 175-196; sequence LVPFIQKASVGITVLSLCALSI. The Cytoplasmic segment spans residues 197-217; the sequence is DRYRAVASWSRIKGIGVPKWT. Residues 218 to 242 traverse the membrane as a helical segment; sequence AVEIVLIWVVSVILAVPEAIGFNLV. Topologically, residues 243–270 are extracellular; that stretch reads TIDYKGSYLRICLLNPTQKTAFMQFYKT. A helical transmembrane segment spans residues 271–295; it reads AKDWWLFSFYFCLPLAITAFFYTLM. At 296–323 the chain is on the cytoplasmic side; sequence TCEMLRKKSGMQIALNDHLKQRREVAKT. Position 304 is a phosphoserine (S304). A helical transmembrane segment spans residues 324 to 349; sequence VFCLVLVFGLCWLALHLSRILKLTLY. The Extracellular portion of the chain corresponds to 350–361; sequence DQNDPNRCELLS. Residues 362–388 form a helical membrane-spanning segment; that stretch reads FLLVLDYIGINMASLNSCINPIALYLV. The Cytoplasmic segment spans residues 389–441; it reads SKRFKNCFKSCLCCWCQSFEEKQSLEEKQSCLKFKANDHGYDNFRSSNKYSSS. Residues C402 and C404 are each lipidated (S-palmitoyl cysteine). S418 carries the post-translational modification Phosphoserine. Residue Y438 is modified to Phosphotyrosine. S439, S440, and S441 each carry phosphoserine.

This sequence belongs to the G-protein coupled receptor 1 family. Endothelin receptor subfamily. EDNRB sub-subfamily.

It is found in the cell membrane. In terms of biological role, non-specific receptor for endothelin 1, 2, and 3. Mediates its action by association with G proteins that activate a phosphatidylinositol-calcium second messenger system. This chain is Endothelin receptor type B (EDNRB), found in Oryctolagus cuniculus (Rabbit).